A 270-amino-acid chain; its full sequence is Shikimate dehydrogenase (NADP(+)) (270 aa).

Residues 15–17 (SLS) and threonine 62 contribute to the shikimate site. Lysine 66 serves as the catalytic Proton acceptor. Positions 87 and 102 each coordinate shikimate. NADP(+)-binding positions include 126-130 (GAGGS), 149-154 (NRTVGR), and isoleucine 210. Tyrosine 212 is a shikimate binding site. Residue glycine 233 coordinates NADP(+).

It belongs to the shikimate dehydrogenase family. Homodimer.

The catalysed reaction is shikimate + NADP(+) = 3-dehydroshikimate + NADPH + H(+). It functions in the pathway metabolic intermediate biosynthesis; chorismate biosynthesis; chorismate from D-erythrose 4-phosphate and phosphoenolpyruvate: step 4/7. In terms of biological role, involved in the biosynthesis of the chorismate, which leads to the biosynthesis of aromatic amino acids. Catalyzes the reversible NADPH linked reduction of 3-dehydroshikimate (DHSA) to yield shikimate (SA). The chain is Shikimate dehydrogenase (NADP(+)) from Hyphomonas neptunium (strain ATCC 15444).